We begin with the raw amino-acid sequence, 148 residues long: Large ribosomal subunit protein bL9 (148 aa).

Belongs to the bacterial ribosomal protein bL9 family.

Binds to the 23S rRNA. In Bacillus cereus (strain ATCC 10987 / NRS 248), this protein is Large ribosomal subunit protein bL9.